The sequence spans 1004 residues: MTIMDIDDHSRLRDLAVSLIRQAAEGYSPKYGYGSMSCAAYDTAWVSLVAKPFNGIKKWLFPQSFKFLLENQENDGSWGRQTSPVDRILNTAAPLLSLQRHAREPLQLHDVCEDGDLDDRIHRATLSLQRQLSDWDIASTAHVGFEIIVPALLNLLAAEGLCFSFKAQDELMKVNAAKLKRFDPEVLLYGKHKTTLLHSLEAFVGIIDFDKVVHHKVGGSFMASPSATAAYLMNASCWDDEAEDYIKNVLVNGSGRGHGAVPSAYPSSNFEYSWLLSTLLHAGFTAKDIECPELCDVAGMLENSFIEGQGTIGFARSISSDADDTAKAAFALNKLGYDVSVNEMVKEFEVKNHFQTYPSERDASLSANCNTLLALLHQKQVGAYQPQILKCVKFLTRCWWNTDGPIRDKWNQSHLYSTMLMVQALTEFQAILDQKGLPYGLNTVEMARVSICLFQGCLRTMLQQCEDGSWSHSREQTAYAVLTLGQARRLSTFKHLQSQIDSAIDQAATFIRLHSVDLAQQSLPEFIWTEKVSYTSPLVTEAYCLAALKVATSLVDNPGIVGESLDLGIPSRQRIDKYIWLFHQTPLFRSLPEWQLRASFIEGHLFLPIVNEHRLDVFPRKNMDPDDDYIRLIPFTWTATNNRNFTFASPAWLYDMIMVSVVDYQADEFMEAVAGLTFSEDLSMLVGLIQEVLTPYKTEPASPVTSLIDMSSVQCPRAKLSNIASGDIEEVRTCLRRFASFFLDHPAVRNAQRDDRATAWREVHNYLVAHVRHTQDNMRLNLQEQRRWYVSRNMPYFHWVRSNDDIACPITFGFVTCLVPYLVANPTVERAVIGNESESIVTSSDVSFDSVESKYYADDVCRHITNVTRIYNDCGSVVRDATEKNLNSVNFPEFAVTASGSEKQALRAMGEYERACCQAAFQRLEEASLQTATTEAERAKRRRRLDVWKVFLDTADPYGQIYVVRDFTARSVHVRETGIASTAKDVPLVSSSVPLVGGGPMLVT.

A DXDD motif motif is present at residues 321–324 (DADD). Aspartate 667, glutamate 671, asparagine 872, aspartate 873, serine 876, and aspartate 880 together coordinate Mg(2+). The short motif at 667-671 (DEFME) is the DEXXE motif element.

This sequence belongs to the terpene synthase family. Mg(2+) is required as a cofactor.

It catalyses the reaction (2E,6E,10E)-geranylgeranyl diphosphate = (+)-copalyl diphosphate. The catalysed reaction is (+)-copalyl diphosphate + H2O = phyllocladan-16alpha-ol + diphosphate. In terms of biological role, involved in the synthesis of labdane-related hydrocarbons by catalyzing the conversion of geranylgeranyl diphosphate (GGDP) to phyllocladan-16-alpha-ol in a two step via type B cyclization into a (+)-copalyl diphosphate ((+)-CDP) intermediate. The chain is Phyllocladan-16-alpha-ol synthase (PaDC1) from Phomopsis amygdali (Fusicoccum amygdali).